Reading from the N-terminus, the 355-residue chain is DNA-binding protein RHL1 (355 aa).

3 disordered regions span residues 1–26, 181–215, and 229–355; these read MVRA…KQRK, DFQG…VDNE, and IQVT…SSKA. The span at 14 to 23 shows a compositional bias: basic and acidic residues; it reads GGDKDDAESK. Low complexity-rich tracts occupy residues 230–246 and 260–274; these read QVTP…VTPV and AETS…SEGN. Basic and acidic residues-rich tracts occupy residues 281–296 and 309–326; these read KPLL…REES and LPEE…KDSK. Positions 344–355 are enriched in low complexity; the sequence is AGTSKAKSSSKA.

In terms of assembly, interacts with BIN4 and TOP6A, but not with TOP6B. In terms of tissue distribution, expressed inproliferating and endoreduplicating cells.

It localises to the nucleus. In terms of biological role, component of the DNA topoisomerase VI complex involved in chromatin organization and progression of endoreduplication cycles. Binds to DNA. Required for endoreduplication beyond 8C. This chain is DNA-binding protein RHL1 (RHL1), found in Arabidopsis thaliana (Mouse-ear cress).